A 664-amino-acid polypeptide reads, in one-letter code: Methionine--tRNA ligase (664 aa).

A 'HIGH' region motif is present at residues 15-25 (YYPSGKAHIGH). Positions 310–314 (KMSKS) match the 'KMSKS' region motif. Residue lysine 313 participates in ATP binding. Residues 563–664 (DFDKIDLRVA…SALPNGAKVK (102 aa)) form the tRNA-binding domain.

This sequence belongs to the class-I aminoacyl-tRNA synthetase family. MetG type 2B subfamily. As to quaternary structure, homodimer.

The protein localises to the cytoplasm. The enzyme catalyses tRNA(Met) + L-methionine + ATP = L-methionyl-tRNA(Met) + AMP + diphosphate. In terms of biological role, is required not only for elongation of protein synthesis but also for the initiation of all mRNA translation through initiator tRNA(fMet) aminoacylation. This chain is Methionine--tRNA ligase (metG), found in Listeria monocytogenes serovar 1/2a (strain ATCC BAA-679 / EGD-e).